Here is a 702-residue protein sequence, read N- to C-terminus: MASSRVPQQLFLQGVAAVYLFAFASLYTQIPGLYGPEGILPARRTLRPQGKGLWQQLWETPTLLWEAPRLGLDTAQGLDLLTLLGTVLALGALLLNSLRHPFVYLLLWVAYRSAYQVGQVFLYFQWDSLLLETGFLAILVAPLRGPSKHKILQGRLAGALPHEDLPFWLVRWLLFRLMFASGVVKLTSRCPTWWGLTALTYHYETQCLPTPAAWFAHHLPVWLHKLSVVATFLIEIAVPPLFFAPIRRLRLTAFYAQALLQVLIIITGNYNFFNLLTLVLTTALLDDRHLSAEPGLRCHKKMPTSWPKALLTALSLLLELTVYGLLAYGTVYYFGLEVDWQQHIILSKTTFTFHQFSQWLKTVTLPTVWLGTASLAWELLVVLWRWIQVQGWSRKFSAGIQLSVLGTATVALFLISLVPYSYVEPGTHGRLWTGAHRLFGSVEHLQLANSYGLFRRMTGVGGRPEVVLEGSYDGQHWTEIEFMYKPGNVSRPPPFLTPHQPRLDWQMWFAALGPHTHSPWFTGLVLRLLQGKEPVIRLVQSHVANYPFHERPPTYLRAQRYKYWFSKPGDQSRWWHRQWVEEFFPSVSLGDPTLETLLQQFGLKDKSPPRARSPSNGLAQTLNWVRTQLSPLEPPILLWGLFGAVVAIRVVQTLLAPRPLQSSKQTREEKRKQTSKKDSRAASEQAAANSNSRDSWAPRRKK.

The next 8 helical transmembrane spans lie at 10–30 (LFLQGVAAVYLFAFASLYTQI), 75–95 (AQGLDLLTLLGTVLALGALLL), 164–184 (DLPFWLVRWLLFRLMFASGVV), 226–246 (LSVVATFLIEIAVPPLFFAPI), 259–279 (LLQVLIIITGNYNFFNLLTLV), 316–336 (LLLELTVYGLLAYGTVYYFGL), 363–383 (VTLPTVWLGTASLAWELLVVL), and 398–418 (AGIQLSVLGTATVALFLISLV). The N-linked (GlcNAc...) asparagine glycan is linked to N488. A helical transmembrane segment spans residues 636–656 (ILLWGLFGAVVAIRVVQTLLA). A disordered region spans residues 660–702 (LQSSKQTREEKRKQTSKKDSRAASEQAAANSNSRDSWAPRRKK). Residues 665-681 (QTREEKRKQTSKKDSRA) are compositionally biased toward basic and acidic residues. A compositionally biased stretch (low complexity) spans 682–693 (ASEQAAANSNSR).

This sequence belongs to the lipase maturation factor family.

Its subcellular location is the endoplasmic reticulum membrane. In terms of biological role, involved in the maturation of specific proteins in the endoplasmic reticulum. May be required for maturation and transport of active lipoprotein lipase (LPL) through the secretory pathway. The sequence is that of Lipase maturation factor 2 (Lmf2) from Mus musculus (Mouse).